The sequence spans 226 residues: 7-cyano-7-deazaguanine synthase (226 aa).

8–18 is a binding site for ATP; it reads LSGGLDSTTTL. The Zn(2+) site is built by Cys188, Cys198, Cys201, and Cys204.

The protein belongs to the QueC family. The cofactor is Zn(2+).

The catalysed reaction is 7-carboxy-7-deazaguanine + NH4(+) + ATP = 7-cyano-7-deazaguanine + ADP + phosphate + H2O + H(+). It participates in purine metabolism; 7-cyano-7-deazaguanine biosynthesis. Functionally, catalyzes the ATP-dependent conversion of 7-carboxy-7-deazaguanine (CDG) to 7-cyano-7-deazaguanine (preQ(0)). The chain is 7-cyano-7-deazaguanine synthase from Nitrosomonas eutropha (strain DSM 101675 / C91 / Nm57).